We begin with the raw amino-acid sequence, 276 residues long: Anamorsin homolog (276 aa).

The N-terminal SAM-like domain stretch occupies residues 1 to 152 (MEPYVVDNLN…TRGSSIKLPW (152 aa)). The linker stretch occupies residues 152–189 (WAHSDIEAAWENVDNETSYDVDKNLINTNSLLQKSDYV). C195, C211, C214, and C216 together coordinate [2Fe-2S] cluster. Residues 195-216 (CGQEFAKNSIGKRKRACKNCTC) are fe-S binding site A. Positions 237, 240, 248, and 251 each coordinate [4Fe-4S] cluster. Short sequence motifs (cx2C motif) lie at residues 237–240 (CGNC) and 248–251 (CSTC). Residues 237–251 (CGNCYLGDAFRCSTC) form a fe-S binding site B region.

This sequence belongs to the anamorsin family. Monomer. Requires [2Fe-2S] cluster as cofactor. It depends on [4Fe-4S] cluster as a cofactor.

The protein resides in the cytoplasm. Its subcellular location is the mitochondrion intermembrane space. In terms of biological role, component of the cytosolic iron-sulfur (Fe-S) protein assembly (CIA) machinery. Required for the maturation of extramitochondrial Fe-S proteins. Part of an electron transfer chain functioning in an early step of cytosolic Fe-S biogenesis, facilitating the de novo assembly of a [4Fe-4S] cluster on the cytosolic Fe-S scaffold complex. Electrons are transferred from NADPH via a FAD- and FMN-containing diflavin oxidoreductase. Together with the diflavin oxidoreductase, also required for the assembly of the diferric tyrosyl radical cofactor of ribonucleotide reductase (RNR), probably by providing electrons for reduction during radical cofactor maturation in the catalytic small subunit. This Schistosoma japonicum (Blood fluke) protein is Anamorsin homolog.